The chain runs to 1165 residues: DNA-directed RNA polymerase subunit beta (1165 aa).

Belongs to the RNA polymerase beta chain family. In terms of assembly, the RNAP catalytic core consists of 2 alpha, 1 beta, 1 beta' and 1 omega subunit. When a sigma factor is associated with the core the holoenzyme is formed, which can initiate transcription.

It catalyses the reaction RNA(n) + a ribonucleoside 5'-triphosphate = RNA(n+1) + diphosphate. DNA-dependent RNA polymerase catalyzes the transcription of DNA into RNA using the four ribonucleoside triphosphates as substrates. The polypeptide is DNA-directed RNA polymerase subunit beta (Leifsonia xyli subsp. xyli (strain CTCB07)).